A 165-amino-acid chain; its full sequence is MNSLENLILVGVIKSCHGIKGHVMLKSFTDPATKILERNLVNESGANIYIKLISQNAKGELICTFNDIATRNEAEHLKGYKIFCLRASLPELEEDEFYIADLTHLPVLNQDHKEIGKIKNILNFGAGDIIEIEFSDQTTELLPFNKEFFPIITKDYVILNYQREA.

The PRC barrel domain occupies 94 to 165; that stretch reads EDEFYIADLT…YVILNYQREA (72 aa).

Belongs to the RimM family. In terms of assembly, binds ribosomal protein uS19.

The protein resides in the cytoplasm. An accessory protein needed during the final step in the assembly of 30S ribosomal subunit, possibly for assembly of the head region. Essential for efficient processing of 16S rRNA. May be needed both before and after RbfA during the maturation of 16S rRNA. It has affinity for free ribosomal 30S subunits but not for 70S ribosomes. This Rickettsia rickettsii (strain Iowa) protein is Ribosome maturation factor RimM.